The primary structure comprises 1073 residues: Carbamoyl phosphate synthase large chain (1073 aa).

The interval 1–402 is carboxyphosphate synthetic domain; the sequence is MPRRIDVRKV…ALQKAIRMLD (402 aa). ATP is bound by residues Arg-129, Arg-169, Gly-175, Gly-176, Lys-208, Leu-210, Glu-215, Gly-241, Val-242, His-243, Gln-284, and Glu-299. One can recognise an ATP-grasp 1 domain in the interval 133 to 328; sequence RETMMKAGLP…LAYIAAKLAL (196 aa). Residues Gln-284, Glu-299, and Asn-301 each contribute to the Mg(2+) site. Gln-284, Glu-299, and Asn-301 together coordinate Mn(2+). The oligomerization domain stretch occupies residues 403–555; the sequence is IGEPGVVAGP…MSYNAYEDDE (153 aa). The carbamoyl phosphate synthetic domain stretch occupies residues 556–944; the sequence is PITTGRPRLI…LKSWLSVQGN (389 aa). One can recognise an ATP-grasp 2 domain in the interval 681 to 871; that stretch reads SQLLEELGIK…LMRAAAEAAL (191 aa). ATP-binding residues include Arg-717, Lys-756, Leu-758, Glu-763, Gly-787, Val-788, His-789, Ser-790, Gln-830, and Glu-842. Mg(2+) contacts are provided by Gln-830, Glu-842, and Asn-844. Residues Gln-830, Glu-842, and Asn-844 each coordinate Mn(2+). Residues 944–1073 enclose the MGS-like domain; the sequence is NRIPPAGSIV…EYWGPNVEPF (130 aa). Residues 945–1073 are allosteric domain; it reads RIPPAGSIVL…EYWGPNVEPF (129 aa).

Belongs to the CarB family. Composed of two chains; the small (or glutamine) chain promotes the hydrolysis of glutamine to ammonia, which is used by the large (or ammonia) chain to synthesize carbamoyl phosphate. Tetramer of heterodimers (alpha,beta)4. It depends on Mg(2+) as a cofactor. The cofactor is Mn(2+).

It catalyses the reaction hydrogencarbonate + L-glutamine + 2 ATP + H2O = carbamoyl phosphate + L-glutamate + 2 ADP + phosphate + 2 H(+). The enzyme catalyses hydrogencarbonate + NH4(+) + 2 ATP = carbamoyl phosphate + 2 ADP + phosphate + 2 H(+). Its pathway is amino-acid biosynthesis; L-arginine biosynthesis; carbamoyl phosphate from bicarbonate: step 1/1. The protein operates within pyrimidine metabolism; UMP biosynthesis via de novo pathway; (S)-dihydroorotate from bicarbonate: step 1/3. Functionally, large subunit of the glutamine-dependent carbamoyl phosphate synthetase (CPSase). CPSase catalyzes the formation of carbamoyl phosphate from the ammonia moiety of glutamine, carbonate, and phosphate donated by ATP, constituting the first step of 2 biosynthetic pathways, one leading to arginine and/or urea and the other to pyrimidine nucleotides. The large subunit (synthetase) binds the substrates ammonia (free or transferred from glutamine from the small subunit), hydrogencarbonate and ATP and carries out an ATP-coupled ligase reaction, activating hydrogencarbonate by forming carboxy phosphate which reacts with ammonia to form carbamoyl phosphate. The chain is Carbamoyl phosphate synthase large chain from Hyperthermus butylicus (strain DSM 5456 / JCM 9403 / PLM1-5).